The sequence spans 700 residues: Calpain-2 catalytic subunit (700 aa).

A propeptide spans 2 to 19 (AGMAAALAKERAAAAGAG) (anchors to the small subunit). A Calpain catalytic domain is found at 45-344 (LFHDPSFPAG…YSRLEICNLT (300 aa)). Residues G91 and D96 each coordinate Ca(2+). Residue C105 is part of the active site. Ca(2+) is bound by residues E175, Q229, and K230. Catalysis depends on residues H262 and N286. Residues E292, D299, and E323 each contribute to the Ca(2+) site. Positions 345 to 514 (PDTLASDRYK…KNANSTVIDD (170 aa)) are domain III. The linker stretch occupies residues 515-529 (EIEANFEETEIDEDD). Positions 530 to 700 (IEPSFKKLFG…LINWLFFTVI (171 aa)) are domain IV. Residues A542, D545, E547, E552, D585, D587, S589, K591, E596, D615, D617, S619, T621, E626, D658, and N661 each contribute to the Ca(2+) site. EF-hand domains follow at residues 572–605 (FSIETCKIMVDLLDNDGSGKLGLKEFHTLWTKIQ) and 602–637 (TKIQKYQKIYREIDVDRSGTMNSYEMRRALEAAGFK). Residues 667–700 (IRLETLYKMFRKLDTEKTGTIELNLINWLFFTVI) form the EF-hand 3 domain.

It belongs to the peptidase C2 family. Forms a heterodimer with a small (regulatory) subunit (CAPNS1). Ca(2+) serves as cofactor. Ubiquitous.

Its subcellular location is the cytoplasm. It localises to the cell membrane. It carries out the reaction Broad endopeptidase specificity.. With respect to regulation, activated by 200-1000 micromolar concentrations of calcium and inhibited by calpastatin. Its function is as follows. Calcium-regulated non-lysosomal thiol-protease which catalyze limited proteolysis of substrates involved in cytoskeletal remodeling and signal transduction. The protein is Calpain-2 catalytic subunit (CAPN2) of Gallus gallus (Chicken).